Here is a 576-residue protein sequence, read N- to C-terminus: Insulin-like growth factor 2 mRNA-binding protein 1 (576 aa).

RRM domains lie at 2–75 and 81–156; these read NKLY…HSVP and RKIQ…YIPD. The tract at residues 158–189 is disordered; it reads QSVQGPENGRRGGFGARGAPRQGSPVTAGAPV. KH domains follow at residues 195–260 and 276–343; these read DIPL…CKMI and EVPL…EQEI. Residue Y396 is modified to Phosphotyrosine; by SRC. 2 KH domains span residues 404–469 and 486–552; these read QETV…QGRI and KLET…QRKI.

The protein belongs to the RRM IMP/VICKZ family. In terms of assembly, can form homooligomers and heterooligomers with IGF2BP1 and IGF2BP3 in an RNA-dependent manner. Associates with the cytoskeleton, predominantly with actin filament bundles and occasionally with microtubules. In a heterologous system, interacts with ELAVL1, DHX9 and HNRNPU. In terms of processing, phosphorylated by SRC at Tyr-396. This residue is involved in ACTB mRNA binding, its phosphorylation impairs association with ACTB mRNA and hence abolishes translational repression. Phosphorylation occurs in close proximity to filopodia and in the growth cones of differentiated neuroglioblastoma cells. Expressed in neurons and embryonic fibroblasts (at protein level).

It localises to the nucleus. It is found in the cytoplasm. Its subcellular location is the perinuclear region. The protein localises to the P-body. The protein resides in the stress granule. It localises to the cell projection. It is found in the growth cone. Its subcellular location is the filopodium. The protein localises to the lamellipodium. In terms of biological role, RNA-binding factor that recruits target transcripts to cytoplasmic protein-RNA complexes (mRNPs). This transcript 'caging' into mRNPs allows mRNA transport and transient storage. It also modulates the rate and location at which target transcripts encounter the translational apparatus and shields them from endonuclease attacks or microRNA-mediated degradation. Preferentially binds to N6-methyladenosine (m6A)-containing mRNAs and increases their stability. Plays a direct role in the transport and translation of transcripts required for axonal regeneration in adult sensory neurons. Regulates localized beta-actin/ACTB mRNA translation in polarized cells, a crucial process for cell migration and neurite outgrowth. Co-transcriptionally associates with the ACTB mRNA in the nucleus. This binding involves by a conserved 54-nucleotide element in the ACTB mRNA 3'-UTR, known as the 'zipcode'. The ribonucleoparticle (RNP) thus formed is exported to the cytoplasm, binds to a motor protein and is transported along the cytoskeleton to the cell periphery. During transport, IGF2BP1 prevents beta-actin mRNA from being translated into protein. When the RNP complex reaches its destination near the plasma membrane, IGF2BP1 is phosphorylated by SRC. This releases the mRNA, allowing ribosomal 40S and 60S subunits to assemble and initiate ACTB protein synthesis. The monomeric ACTB protein then assembles into the subcortical actin cytoskeleton, which pushes the leading edge onwards. Binds MYC mRNA. Binding to MYC mRNA is enhanced by m6A-modification of the CRD. Promotes the directed movement of cells by fine-tuning intracellular signaling networks. Binds to MAPK4 3'-UTR and inhibits its translation. Interacts with PTEN transcript open reading frame (ORF) and prevents mRNA decay. This combined action on MAPK4 (down-regulation) and PTEN (up-regulation) antagonizes HSPB1 phosphorylation, consequently it prevents G-actin sequestration by phosphorylated HSPB1, allowing F-actin polymerization. Hence enhances the velocity of cell migration and stimulates directed cell migration by PTEN-modulated polarization. This chain is Insulin-like growth factor 2 mRNA-binding protein 1 (IGF2BP1), found in Gallus gallus (Chicken).